The primary structure comprises 428 residues: Enolase (428 aa).

Position 173 (glutamine 173) interacts with (2R)-2-phosphoglycerate. Residue glutamate 217 is the Proton donor of the active site. The Mg(2+) site is built by aspartate 253, glutamate 294, and aspartate 320. Lysine 345, arginine 374, serine 375, and lysine 396 together coordinate (2R)-2-phosphoglycerate. Residue lysine 345 is the Proton acceptor of the active site.

The protein belongs to the enolase family. The cofactor is Mg(2+).

The protein localises to the cytoplasm. It is found in the secreted. The protein resides in the cell surface. It carries out the reaction (2R)-2-phosphoglycerate = phosphoenolpyruvate + H2O. It participates in carbohydrate degradation; glycolysis; pyruvate from D-glyceraldehyde 3-phosphate: step 4/5. Functionally, catalyzes the reversible conversion of 2-phosphoglycerate (2-PG) into phosphoenolpyruvate (PEP). It is essential for the degradation of carbohydrates via glycolysis. The polypeptide is Enolase (Methanosarcina mazei (strain ATCC BAA-159 / DSM 3647 / Goe1 / Go1 / JCM 11833 / OCM 88) (Methanosarcina frisia)).